Consider the following 429-residue polypeptide: Adenylosuccinate synthetase (429 aa).

GTP is bound by residues 12-18 (GDEGKGK) and 40-42 (GHT). The Proton acceptor role is filled by Asp-13. Positions 13 and 40 each coordinate Mg(2+). IMP contacts are provided by residues 13 to 16 (DEGK), 38 to 41 (NAGH), Thr-128, Arg-142, Gln-223, Thr-238, and Arg-302. Catalysis depends on His-41, which acts as the Proton donor. 298 to 304 (VNTGRKR) contacts substrate. GTP contacts are provided by residues Arg-304, 330 to 332 (KLD), and 412 to 414 (GVG).

It belongs to the adenylosuccinate synthetase family. As to quaternary structure, homodimer. The cofactor is Mg(2+).

It localises to the cytoplasm. The catalysed reaction is IMP + L-aspartate + GTP = N(6)-(1,2-dicarboxyethyl)-AMP + GDP + phosphate + 2 H(+). The protein operates within purine metabolism; AMP biosynthesis via de novo pathway; AMP from IMP: step 1/2. Functionally, plays an important role in the de novo pathway of purine nucleotide biosynthesis. Catalyzes the first committed step in the biosynthesis of AMP from IMP. In Corynebacterium jeikeium (strain K411), this protein is Adenylosuccinate synthetase.